We begin with the raw amino-acid sequence, 440 residues long: Glyceraldehyde-3-phosphate dehydrogenase, testis-specific (440 aa).

Residues 1–105 (MSRRDVVLTN…PPPPPLQKPA (105 aa)) form a testis-specific N-terminal extension region. Composition is skewed to pro residues over residues 40–75 (PPKLEDPPPTVEEQPPPPPPPPPPPPPPPPPPPPQI) and 83–102 (APPPPPPPPPPPPPPPPPLQ). Residues 40–106 (PPKLEDPPPT…PPPPLQKPAR (67 aa)) are disordered. Residues 117–118 (RI), aspartate 138, lysine 183, tyrosine 205, and threonine 225 each bind NAD(+). Residues 255–257 (SCT), threonine 286, 315–316 (TG), and arginine 338 contribute to the D-glyceraldehyde 3-phosphate site. Cysteine 256 (nucleophile) is an active-site residue. The residue at position 358 (serine 358) is a Phosphoserine. Asparagine 420 provides a ligand contact to NAD(+).

The protein belongs to the glyceraldehyde-3-phosphate dehydrogenase family. As to quaternary structure, homotetramer. As to expression, testis specific.

The protein localises to the cytoplasm. The enzyme catalyses D-glyceraldehyde 3-phosphate + phosphate + NAD(+) = (2R)-3-phospho-glyceroyl phosphate + NADH + H(+). Its pathway is carbohydrate degradation; glycolysis; pyruvate from D-glyceraldehyde 3-phosphate: step 1/5. In terms of biological role, may play an important role in regulating the switch between different pathways for energy production during spermiogenesis and in the spermatozoon. Required for sperm motility and male fertility. This Mus musculus (Mouse) protein is Glyceraldehyde-3-phosphate dehydrogenase, testis-specific (Gapdhs).